We begin with the raw amino-acid sequence, 94 residues long: Exodeoxyribonuclease 7 small subunit (94 aa).

Belongs to the XseB family. Heterooligomer composed of large and small subunits.

Its subcellular location is the cytoplasm. It catalyses the reaction Exonucleolytic cleavage in either 5'- to 3'- or 3'- to 5'-direction to yield nucleoside 5'-phosphates.. Bidirectionally degrades single-stranded DNA into large acid-insoluble oligonucleotides, which are then degraded further into small acid-soluble oligonucleotides. This chain is Exodeoxyribonuclease 7 small subunit, found in Trichormus variabilis (strain ATCC 29413 / PCC 7937) (Anabaena variabilis).